A 216-amino-acid chain; its full sequence is Co-chaperone protein SBA1 (216 aa).

Ser-2 bears the N-acetylserine mark. Positions 5–108 (VINPQVAWAQ…LESEYWPRLT (104 aa)) constitute a CS domain. 2 repeats span residues 141–156 (AQGM…AGGA) and 160–174 (GGMD…AGGA). A disordered region spans residues 169–216 (GGAGGAGSPDMAQLQQLLAQSGGNLDMGDFKENDEEDEEEEIEPEVKA). The segment covering 200-216 (ENDEEDEEEEIEPEVKA) has biased composition (acidic residues).

The protein belongs to the p23/wos2 family. As to quaternary structure, interacts with HSP82.

Its function is as follows. Acts as a co-chaperone. The protein is Co-chaperone protein SBA1 (SBA1) of Saccharomyces cerevisiae (strain ATCC 204508 / S288c) (Baker's yeast).